We begin with the raw amino-acid sequence, 206 residues long: MLSAQLEAYLAEINLPATAEQKKQLLDFVGMLNKWNKAYNLTSVRDPEAMLVRHIMDSLVVSPHLQGERFIDVGTGPGLPGIPLAIMNPDKTFVLLDSLGKRIRFQKQVAFELGIHNISSIESRVEAYQPEQKFDGVLSRAFASIHDMLTWCHHLPAEHGQFYALKGLLSDEEMQQIPAGFVVTETIELQVPRLDEQRHLLKIIKE.

S-adenosyl-L-methionine contacts are provided by residues Gly74, Leu79, 125 to 126, and Arg140; that span reads VE.

This sequence belongs to the methyltransferase superfamily. RNA methyltransferase RsmG family.

Its subcellular location is the cytoplasm. The enzyme catalyses guanosine(527) in 16S rRNA + S-adenosyl-L-methionine = N(7)-methylguanosine(527) in 16S rRNA + S-adenosyl-L-homocysteine. Specifically methylates the N7 position of guanine in position 527 of 16S rRNA. This Shewanella sp. (strain ANA-3) protein is Ribosomal RNA small subunit methyltransferase G.